The sequence spans 111 residues: uncharacterized protein (111 aa).

This is an uncharacterized protein from Caenorhabditis elegans.